We begin with the raw amino-acid sequence, 243 residues long: tRNA pseudouridine synthase A (243 aa).

Catalysis depends on D53, which acts as the Nucleophile. A substrate-binding site is contributed by Y111.

Belongs to the tRNA pseudouridine synthase TruA family. In terms of assembly, homodimer.

It catalyses the reaction uridine(38/39/40) in tRNA = pseudouridine(38/39/40) in tRNA. In terms of biological role, formation of pseudouridine at positions 38, 39 and 40 in the anticodon stem and loop of transfer RNAs. This chain is tRNA pseudouridine synthase A, found in Chlorobium limicola (strain DSM 245 / NBRC 103803 / 6330).